The chain runs to 431 residues: Beclin-2 (431 aa).

A disordered region spans residues 17–74; it reads LSGSSESRSLPAAPAPTSGQAEPGDTREPGVTTREVTDAEEQQDGASSRSPPGDGSVS. Residues 125 to 248 are a coiled coil; the sequence is LLEQLDIQLA…ARVQRDRLKE (124 aa). Residues 173–243 are required for homodimer formation; sequence EARLVQELED…NQLQYARVQR (71 aa).

Belongs to the beclin family. As to quaternary structure, homodimer (via coiled-coil domain). Interacts (via coiled-coil domain) with ATG14 (via coiled-coil domain); this interaction is tighter than BECN2 self-association. Interacts with AMBRA1, UVRAG and PIK3C3/VPS34; these interactions are not disrupted by starvation. Does not interact with RUBCN. Interacts (via N-terminus) with GPRASP1/GASP1; the interaction is direct. As to expression, present in fetal and adult brain (at protein level).

The protein resides in the cytoplasm. In terms of biological role, involved in 2 distinct lysosomal degradation pathways: acts as a regulator of autophagy and as a regulator of G-protein coupled receptors turnover. Regulates degradation in lysosomes of a variety of G-protein coupled receptors via its interaction with GPRASP1/GASP1. The protein is Beclin-2 of Homo sapiens (Human).